Reading from the N-terminus, the 543-residue chain is Chaperonin GroEL (543 aa).

ATP-binding positions include 29–32 (TLGP), lysine 50, 86–90 (DGTTT), glycine 415, and aspartate 495.

It belongs to the chaperonin (HSP60) family. In terms of assembly, forms a cylinder of 14 subunits composed of two heptameric rings stacked back-to-back. Interacts with the co-chaperonin GroES.

Its subcellular location is the cytoplasm. The catalysed reaction is ATP + H2O + a folded polypeptide = ADP + phosphate + an unfolded polypeptide.. Functionally, together with its co-chaperonin GroES, plays an essential role in assisting protein folding. The GroEL-GroES system forms a nano-cage that allows encapsulation of the non-native substrate proteins and provides a physical environment optimized to promote and accelerate protein folding. The polypeptide is Chaperonin GroEL (Karelsulcia muelleri (strain GWSS) (Sulcia muelleri)).